A 488-amino-acid polypeptide reads, in one-letter code: Ribulose bisphosphate carboxylase large chain (488 aa).

Substrate-binding residues include Asn127 and Thr177. Lys179 acts as the Proton acceptor in catalysis. Lys181 lines the substrate pocket. Lys205, Asp207, and Glu208 together coordinate Mg(2+). Lys205 is modified (N6-carboxylysine). The active-site Proton acceptor is the His297. Positions 298, 330, and 382 each coordinate substrate.

Belongs to the RuBisCO large chain family. Type I subfamily. In terms of assembly, heterohexadecamer of 8 large chains and 8 small chains. Mg(2+) serves as cofactor.

The protein resides in the plastid. It is found in the chloroplast. It catalyses the reaction 2 (2R)-3-phosphoglycerate + 2 H(+) = D-ribulose 1,5-bisphosphate + CO2 + H2O. It carries out the reaction D-ribulose 1,5-bisphosphate + O2 = 2-phosphoglycolate + (2R)-3-phosphoglycerate + 2 H(+). In terms of biological role, ruBisCO catalyzes two reactions: the carboxylation of D-ribulose 1,5-bisphosphate, the primary event in carbon dioxide fixation, as well as the oxidative fragmentation of the pentose substrate in the photorespiration process. Both reactions occur simultaneously and in competition at the same active site. This Pylaiella littoralis (Seaweed) protein is Ribulose bisphosphate carboxylase large chain.